Consider the following 345-residue polypeptide: Phosphoribosylformylglycinamidine cyclo-ligase (345 aa).

This sequence belongs to the AIR synthase family.

The protein resides in the cytoplasm. The enzyme catalyses 2-formamido-N(1)-(5-O-phospho-beta-D-ribosyl)acetamidine + ATP = 5-amino-1-(5-phospho-beta-D-ribosyl)imidazole + ADP + phosphate + H(+). The protein operates within purine metabolism; IMP biosynthesis via de novo pathway; 5-amino-1-(5-phospho-D-ribosyl)imidazole from N(2)-formyl-N(1)-(5-phospho-D-ribosyl)glycinamide: step 2/2. The polypeptide is Phosphoribosylformylglycinamidine cyclo-ligase (Salmonella typhi).